Reading from the N-terminus, the 152-residue chain is UPF0178 protein YaiI (152 aa).

This sequence belongs to the UPF0178 family.

This is UPF0178 protein YaiI from Escherichia coli O81 (strain ED1a).